The sequence spans 820 residues: MNISYNWLKEYVNFDLTPDEVAAALTSIGLETGGVEEVQTIKGGLEGLVIGEVLTCVEHPNSDHLHITTVNLGNGEPTQIVCGAPNVAAGQKVVVATLGTKLYDGDECFTIKKSKIRGVESIGMICAEDEIGIGTSHDGIIVLPEDAVPGTLAKDYYNVKSDYVLEVDITPNRADACSHYGVARDLYAYLVQNGKQAALTRPSVDAFAVENHDLDIKVTVENSEACPRYAGVTVKGVTVKESPEWLQNKLRIIGLRPINNVVDITNYIVHAFGQPLHCFDANKIKGGEVIVKTMPEGTTFVTLDGVERKLNERDLMICNKEDAMCIAGVFGGLDSGSTEATTDVFLESAYFHPTWVRKTARRHGLNTDASFRFERGIDPNITIYCLKLAAMMVKELAGGTISSEIKDVCAAPAQDFIVELTYEKVHSLIGKVIPVETIKSIVTSLEMKIMDETAEGLTLAVPPYRVDVQRDCDVIEDILRIYGYNNVEIPSTLKSSLTTKGDCDKSNKLQNLVAEQLVGCGFNEILNNSLTRAAYYDGLESYPSKNLVMLLNPLSADLNCMRQTLLFGGLESIAHNANRKNADLKFFEFGNCYHFDAEKKNPEKVLAPYSEDYHLGLWVTGKMVSNSWAHADENTSVYELKAYVENIFKRLGLDLHSLVVGNLSDDIYSTALTVNTKGGKRLATFGVVTKKMLKAFDVDNEVYYADLNWKELMKAIRSVKVSYKEISKFPAVKRDLALLLDKKVQFAEIEKIAYETEKKLLKEVSLFDVYEGKNLEAGKKSYAVSFLLQDESQTLNDKMIDKIMSKLVKNLEDKLGAKLR.

One can recognise a tRNA-binding domain in the interval 42-154; the sequence is KGGLEGLVIG…EDAVPGTLAK (113 aa). A B5 domain is found at 413–489; the sequence is AQDFIVELTY…RIYGYNNVEI (77 aa). Mg(2+) is bound by residues D467, D473, E476, and D477. The FDX-ACB domain maps to 727 to 820; it reads SKFPAVKRDL…LEDKLGAKLR (94 aa).

This sequence belongs to the phenylalanyl-tRNA synthetase beta subunit family. Type 1 subfamily. In terms of assembly, tetramer of two alpha and two beta subunits. Mg(2+) is required as a cofactor.

It is found in the cytoplasm. The enzyme catalyses tRNA(Phe) + L-phenylalanine + ATP = L-phenylalanyl-tRNA(Phe) + AMP + diphosphate + H(+). The protein is Phenylalanine--tRNA ligase beta subunit of Bacteroides fragilis (strain ATCC 25285 / DSM 2151 / CCUG 4856 / JCM 11019 / LMG 10263 / NCTC 9343 / Onslow / VPI 2553 / EN-2).